The primary structure comprises 757 residues: Polyribonucleotide nucleotidyltransferase (757 aa).

Mg(2+) contacts are provided by Asp-531 and Asp-537. The KH domain occupies 597–656 (PRVTTIRVPVDKIGEVIGPKGKIINAITEETGAQISIEDDGTVFVGATDGPSAQAAIDRI). Residues 668–737 (GERFLGTVVK…KRGKISLVLV (70 aa)) enclose the S1 motif domain.

This sequence belongs to the polyribonucleotide nucleotidyltransferase family. Requires Mg(2+) as cofactor.

It localises to the cytoplasm. It carries out the reaction RNA(n+1) + phosphate = RNA(n) + a ribonucleoside 5'-diphosphate. Its function is as follows. Involved in mRNA degradation. Catalyzes the phosphorolysis of single-stranded polyribonucleotides processively in the 3'- to 5'-direction. The polypeptide is Polyribonucleotide nucleotidyltransferase (Mycolicibacterium paratuberculosis (strain ATCC BAA-968 / K-10) (Mycobacterium paratuberculosis)).